An 82-amino-acid polypeptide reads, in one-letter code: U24 protein (82 aa).

The PPXY motif signature appears at 7–10 (PPSY). The helical transmembrane segment at 52-72 (FIILACLIISVILCLILILHI) threads the bilayer.

As to quaternary structure, interacts with host ITCH; this interaction probably mediates ITCH degradation. Interacts probably with NEDD4.

The protein resides in the membrane. Its function is as follows. Down-regulates of the TCR/CD3E complex and the transferrin receptor TFRC in host T-cells by blocking them from recycling back to the cell surface. The sequence is that of U24 protein from Homo sapiens (Human).